The primary structure comprises 179 residues: Large ribosomal subunit protein uL10 (179 aa).

Belongs to the universal ribosomal protein uL10 family. In terms of assembly, part of the ribosomal stalk of the 50S ribosomal subunit. The N-terminus interacts with L11 and the large rRNA to form the base of the stalk. The C-terminus forms an elongated spine to which L12 dimers bind in a sequential fashion forming a multimeric L10(L12)X complex.

Forms part of the ribosomal stalk, playing a central role in the interaction of the ribosome with GTP-bound translation factors. In Mycolicibacterium vanbaalenii (strain DSM 7251 / JCM 13017 / BCRC 16820 / KCTC 9966 / NRRL B-24157 / PYR-1) (Mycobacterium vanbaalenii), this protein is Large ribosomal subunit protein uL10.